Reading from the N-terminus, the 1394-residue chain is Kinesin-like protein KIF27 (1394 aa).

In terms of domain architecture, Kinesin motor spans 5–341; it reads PIKVAVRIRP…LKYANRARNI (337 aa). 84 to 91 is an ATP binding site; that stretch reads GQTGSGKT. Coiled coils occupy residues 352 to 418 and 498 to 554; these read QADR…IEQA and QKDL…ELAK. Disordered regions lie at residues 559–582 and 642–665; these read VPTSAKESCGDGPDARASEKRPHT and FSDNSDDEDSEGQEKPRVRSRSHS. The span at 571-580 shows a compositional bias: basic and acidic residues; sequence PDARASEKRP. A phosphoserine mark is found at S643, S646, S672, S675, and S704. Coiled-coil stretches lie at residues 709–891, 921–1078, 1118–1152, and 1186–1226; these read LQKL…GQGE, LDEQ…SIQS, NKVINLRETERKQQLQNKEMKMKVLERDNVVHELE, and DQDG…RLKD. The tract at residues 886–916 is disordered; it reads KAGQGEGLNPKAEDQDGFNLNRRKSPFRSGD. S999 bears the Phosphoserine mark. The segment covering 1267-1280 has biased composition (basic and acidic residues); that stretch reads TENTKLNGSEREVD. Disordered stretches follow at residues 1267–1319 and 1325–1344; these read TENT…LQSI and ARPFTHSQSPVPHQFQPVRS. Composition is skewed to polar residues over residues 1281–1295 and 1309–1319; these read NSSSSLKTQPLTQQI and IAPSSGQLQSI. Phosphoserine occurs at positions 1365 and 1387.

The protein belongs to the TRAFAC class myosin-kinesin ATPase superfamily. Kinesin family. KIF27 subfamily. In terms of assembly, interacts with STK36.

It localises to the cytoplasm. The protein localises to the cytoskeleton. The protein resides in the cell projection. Its subcellular location is the cilium. Its function is as follows. Plays an essential role in motile ciliogenesis. This is Kinesin-like protein KIF27 (Kif27) from Mus musculus (Mouse).